The primary structure comprises 344 residues: 3-isopropylmalate dehydrogenase (344 aa).

NAD(+) is bound at residue 74–87 (GPKWDALPRKIRPE). Substrate-binding residues include Arg94, Arg104, Arg132, and Asp217. Mg(2+) is bound by residues Asp217, Asp241, and Asp245. 274-286 (GSAPDIAGKGIAN) is an NAD(+) binding site.

Belongs to the isocitrate and isopropylmalate dehydrogenases family. LeuB type 1 subfamily. Homodimer. It depends on Mg(2+) as a cofactor. Requires Mn(2+) as cofactor.

Its subcellular location is the cytoplasm. The catalysed reaction is (2R,3S)-3-isopropylmalate + NAD(+) = 4-methyl-2-oxopentanoate + CO2 + NADH. It functions in the pathway amino-acid biosynthesis; L-leucine biosynthesis; L-leucine from 3-methyl-2-oxobutanoate: step 3/4. Its function is as follows. Catalyzes the oxidation of 3-carboxy-2-hydroxy-4-methylpentanoate (3-isopropylmalate) to 3-carboxy-4-methyl-2-oxopentanoate. The product decarboxylates to 4-methyl-2 oxopentanoate. The protein is 3-isopropylmalate dehydrogenase (leuB) of Thermus aquaticus.